We begin with the raw amino-acid sequence, 1247 residues long: MQYVNGNDISSQSIHEVLELAFSTKIPWTKLEYESSEKHIIHSYSSHERGIYLSKGVAEFNISPENMYELLLDISSRSKWDFHCREAHIIEEYDHLNHIIHLNFTNPLISNLDMNLYRSCKYDPQERLFVIAMRSIELEDGDVDQFECLPNGWVIQGLRGQKDKCKMTFVQQCDLRDIELQRIPGYKSFNSKERLEDFQFLTLFPATVSGRLAKIFESIELYISNNVKDIETKDIRISIMEKAEKEVNEMFGTTNPDYGWKIYLKKLDMEILIKKTTSGYYMIGKGSFSSRYSPELLADVLYQKNPFEWDTFYDKTKLVESINSSIREVEVHYRMWRNTITMRLLQSVKKGPGNFSSVHWRSICSPNYQVADGIEVHYLPTALLNYGLGDGSFTSFLAAIEVKGYPTPWEEEMVTKMFAARIISNQNSIINHVNKLTGGSEMIRELPVIPSVQHHCGDVGSHIGTPQVYNAMVENFADILLDEGNKDGNVVSSKNKRKRNKNNENKNNNNDNIIDEEIEQEEENIEKDQQQTQQQQTQKQQQQQQQQQKTQQQPQQQQQQPQEQQQNHSQLKKEIKPTRPSIRFTYLLSNSSSGQRPIAWYESKKQPFLFLVSDSSERKGKIQRKTYYFSNSGFDNLPEEVVQIIFSNLSAINIVNLSLVCKRFKMATDSPILWKNLYKSNPLFHKKTPKRKQIIHSNLSNDENKVNSNSGDSADGSSSQEEEEQQQQNQQQNQQQNQQQQQQQTFDLSNINLNDPISLLMVFTNGIIPQNLSPTEIINVGGIVSQIDLNDLSNVETLIQQLPHQVLSLIQMNTLDAKIQHLSMISGMPATIGQESPINKNSSDNPKPNAYNKRDNNSYIPDEEFINWKSHYTEKHKQSKRWVNMEPIRITPLKGHNRAIKAVKSEGNSAITVSTEKKIKFWNLNTGQCIGDYEGESGVLSVEYDHTQKSSCIWPLSDYTKVHIGHKNGTVTMVDFIEQPIEVIHTSRPTNLADGFDFTFPGKYLIWEHTIIHYWDVETSTLLWNELNAHTKKITQSKIVAQHELSNKGIVFTTSSDKSAKVWDLTNGTCINTLVGHSYAVNCIEPIGDYMALTGSTDKTLKLWDLRQASTFISSYSTKHTGPIRCISYQEKNGIVLSGSDDGSIIAFNLDNWNLSNISVVKKPIFNNVIGNIGTTTTTTTTTTTTTTTTTSTTNNTNVPEIPKINLGTFKDSKRLHNHESAVTCIESDEAGFISGSQNGLVLRWDF.

The region spanning 1–214 (MQYVNGNDIS…PATVSGRLAK (214 aa)) is the START domain. Disordered stretches follow at residues 484-514 (GNKD…DNII) and 552-576 (QQPQ…KEIK). Positions 552-566 (QQPQQQQQQPQEQQQ) are enriched in low complexity. Residues 631-677 (NSGFDNLPEEVVQIIFSNLSAINIVNLSLVCKRFKMATDSPILWKNL) form the F-box domain. 2 disordered regions span residues 697-744 (SNLS…QQQQ) and 833-856 (GQES…KRDN). 2 stretches are compositionally biased toward low complexity: residues 707-719 (NSNS…GSSS) and 726-744 (QQQN…QQQQ). Polar residues predominate over residues 833–846 (GQESPINKNSSDNP). 7 WD repeats span residues 895 to 934 (GHNR…GDYE), 945 to 984 (DHTQ…IEVI), 988 to 1025 (RPTN…LLWN), 1029 to 1073 (AHTK…CINT), 1076 to 1114 (GHSY…TFIS), 1119 to 1158 (KHTG…LSNI), and 1218 to 1247 (NHES…RWDF).

Component of an SCF complex including at least culA. Formation of this complex appears to require activity of the MAP kinase erk2. Interacts with regA.

In terms of biological role, substrate recognition component of a SCF (SKP1-CUL1-F-box protein) E3 ubiquitin-protein ligase complex which mediates the ubiquitination and subsequent proteasomal degradation of target proteins. May target the cAMP phosphodiesterase regA for degradation leading to an increase in cAMP and PKA activity. Promotes development of prestalk cells as opposed to prespores within the developing fruiting body. Required for culmination and fruiting body development. This chain is F-box/WD repeat-containing protein A (fbxA), found in Dictyostelium discoideum (Social amoeba).